Consider the following 246-residue polypeptide: Octanoyltransferase (246 aa).

A BPL/LPL catalytic domain is found at 50 to 231 (PDTDDEIWVV…RLIAHLDGAT (182 aa)). Substrate contacts are provided by residues 90–97 (RGGQITYH), 162–164 (ALG), and 175–177 (GLS). C193 functions as the Acyl-thioester intermediate in the catalytic mechanism.

It belongs to the LipB family.

The protein localises to the cytoplasm. The enzyme catalyses octanoyl-[ACP] + L-lysyl-[protein] = N(6)-octanoyl-L-lysyl-[protein] + holo-[ACP] + H(+). It participates in protein modification; protein lipoylation via endogenous pathway; protein N(6)-(lipoyl)lysine from octanoyl-[acyl-carrier-protein]: step 1/2. Its function is as follows. Catalyzes the transfer of endogenously produced octanoic acid from octanoyl-acyl-carrier-protein onto the lipoyl domains of lipoate-dependent enzymes. Lipoyl-ACP can also act as a substrate although octanoyl-ACP is likely to be the physiological substrate. In Burkholderia pseudomallei (strain 1106a), this protein is Octanoyltransferase.